The primary structure comprises 879 residues: Phosphoenolpyruvate carboxylase (879 aa).

Catalysis depends on residues histidine 138 and lysine 546.

The protein belongs to the PEPCase type 1 family. Mg(2+) is required as a cofactor.

The enzyme catalyses oxaloacetate + phosphate = phosphoenolpyruvate + hydrogencarbonate. Forms oxaloacetate, a four-carbon dicarboxylic acid source for the tricarboxylic acid cycle. The sequence is that of Phosphoenolpyruvate carboxylase from Pectobacterium carotovorum subsp. carotovorum (strain PC1).